We begin with the raw amino-acid sequence, 285 residues long: Dihydropteroate synthase (285 aa).

The Pterin-binding domain maps to 18–276; the sequence is PKIMGIVNLT…DVKATADALK (259 aa). Residue N25 participates in Mg(2+) binding. (7,8-dihydropterin-6-yl)methyl diphosphate contacts are provided by residues T66, D99, N119, D190, K229, and 264–266; that span reads RVH.

This sequence belongs to the DHPS family. As to quaternary structure, homodimer. Mg(2+) is required as a cofactor.

It catalyses the reaction (7,8-dihydropterin-6-yl)methyl diphosphate + 4-aminobenzoate = 7,8-dihydropteroate + diphosphate. The protein operates within cofactor biosynthesis; tetrahydrofolate biosynthesis; 7,8-dihydrofolate from 2-amino-4-hydroxy-6-hydroxymethyl-7,8-dihydropteridine diphosphate and 4-aminobenzoate: step 1/2. Functionally, catalyzes the condensation of para-aminobenzoate (pABA) with 6-hydroxymethyl-7,8-dihydropterin diphosphate (DHPt-PP) to form 7,8-dihydropteroate (H2Pte), the immediate precursor of folate derivatives. The sequence is that of Dihydropteroate synthase (folP) from Neisseria meningitidis serogroup B (strain ATCC BAA-335 / MC58).